The primary structure comprises 2595 residues: Glucosylceramide transporter ABCA12 (2595 aa).

The chain crosses the membrane as a helical span at residues 23–43; that stretch reads PLWTLVLILWPVIIFIILAIT. Residues N156, N174, N214, N275, N333, N367, N383, N412, N435, N528, N543, N577, N608, N623, N648, N752, N826, N920, and N963 are each glycosylated (N-linked (GlcNAc...) asparagine). The next 3 helical transmembrane spans lie at 1065–1085, 1112–1132, and 1145–1165; these read VSYSLPIVLMVAWVVFIAAFV, FAWLIESVGFLLVTIVILIII, and FILFLYFSDYSFSVIAMSYLI. N1170 carries an N-linked (GlcNAc...) asparagine glycan. Transmembrane regions (helical) follow at residues 1174-1194, 1200-1220, and 1250-1270; these read IAALIGSLIYIIAFFPFIVLV, LSYVLKVFMSLLSPTAFSYAS, and FGWLCCLILADSFIYFLIAWY. Residues 1346–1577 enclose the ABC transporter 1 domain; that stretch reads VALHGVTKIY…FGDGYHLTLT (232 aa). ATP is bound at residue 1378-1385; it reads GPNGAGKT. N-linked (GlcNAc...) asparagine glycosylation is found at N1524, N1663, and N1704. A helical transmembrane segment spans residues 1747–1767; it reads LIAQVILPIVFVTTAMGLGTL. 6 N-linked (GlcNAc...) asparagine glycosylation sites follow: N1769, N1819, N1835, N1876, N1921, and N1952. 4 helical membrane passes run 1979–1999, 2035–2055, 2072–2092, and 2103–2123; these read ATISSLIDILVALSILMGYSV, FIYDMVFYLVPVAFSIGIIAI, LLLLLFGYATFSWMYLLAGLF, and VCVNLFFGINSIVSLSVVYFL. Residue N2178 is glycosylated (N-linked (GlcNAc...) asparagine). Residues 2187 to 2207 form a helical membrane-spanning segment; that stretch reads GAMFVALVSQGTMFFSLRLLI. N-linked (GlcNAc...) asparagine glycosylation is found at N2208 and N2223. Residues 2254–2489 form the ABC transporter 2 domain; the sequence is VQLYCLTKTY…FGRGFTVKVH (236 aa). Residues 2270 to 2290 form a helical membrane-spanning segment; the sequence is IIAVNNISIGIPAGECFGLLG. Position 2290–2297 (2290–2297) interacts with ATP; the sequence is GVNGAGKT. N-linked (GlcNAc...) asparagine glycans are attached at residues N2318, N2542, and N2547. Residues 2571-2595 are disordered; it reads SYETADTSSQGSTISVDSQDDQMES. The span at 2574–2587 shows a compositional bias: polar residues; that stretch reads TADTSSQGSTISVD.

Belongs to the ABC transporter superfamily. ABCA family. In terms of assembly, interacts with NR1H2 and ABCA1; this interaction is required for ABCA1 localization to the cell surface and is necessary for its normal activity and stability. Mainly expressed in the stomach, placenta, testis and fetal brain. Expressed in the upper epidermal layers, mainly the granular layers, of skin. Expressed throughout the normal interfollicular epidermis with prominent expression in the stratum granulosum. Expressed in alpha and beta cells of pancreatic islets.

Its subcellular location is the cytoplasmic vesicle. It is found in the secretory vesicle membrane. The protein resides in the golgi apparatus membrane. The enzyme catalyses ATP + H2O + phospholipidSide 1 = ADP + phosphate + phospholipidSide 2.. It catalyses the reaction a beta-D-glucosylceramide(in) + ATP + H2O = a beta-D-glucosylceramide(out) + ADP + phosphate + H(+). Transports lipids such as glucosylceramides from the outer to the inner leaflet of lamellar granules (LGs) membrane, whereby the lipids are finally transported to the keratinocyte periphery via the trans-Golgi network and LGs and released to the apical surface of the granular keratinocytes to form lipid lamellae in the stratum corneum of the epidermis, which is essential for skin barrier function. In the meantime, participates in the transport of the lamellar granules-associated proteolytic enzymes, in turn regulates desquamation and keratinocyte differentiation. Furthermore, is essential for the regulation of cellular cholesterol homeostasis by regulating ABCA1-dependent cholesterol efflux from macrophages through interaction with NR1H2 and ABCA1. Plays pleiotropic roles in regulating glucose stimulated insulin secretion from beta cells, regulating the morphology and fusion of insulin granules, lipid raft abundance and the actin cytoskeleton. Also involved in lung surfactant biogenesis. The protein is Glucosylceramide transporter ABCA12 of Homo sapiens (Human).